An 824-amino-acid chain; its full sequence is Leucine--tRNA ligase (824 aa).

A 'HIGH' region motif is present at residues 42-52; sequence PYPSGRIHMGH. Residues 581–585 carry the 'KMSKS' region motif; the sequence is KMSKS. ATP is bound at residue K584.

This sequence belongs to the class-I aminoacyl-tRNA synthetase family.

The protein localises to the cytoplasm. The catalysed reaction is tRNA(Leu) + L-leucine + ATP = L-leucyl-tRNA(Leu) + AMP + diphosphate. The sequence is that of Leucine--tRNA ligase from Geobacter sulfurreducens (strain ATCC 51573 / DSM 12127 / PCA).